The chain runs to 194 residues: Dof zinc finger protein DOF1.7 (194 aa).

A Dof-type zinc finger spans residues 33–87 (LKCPRCDSPNTKFCYYNNYNLSQPRHFCKNCRRYWTKGGALRNIPVGGGTRKSNK). The Zn(2+) site is built by cysteine 35, cysteine 38, cysteine 60, and cysteine 63. The interval 74-125 (RNIPVGGGTRKSNKRSGSSPSSNLKNQTVAEKPDHHGSGSEEKEERVSGQEM) is disordered. Residues 88–99 (RSGSSPSSNLKN) show a composition bias toward low complexity. Over residues 104–121 (EKPDHHGSGSEEKEERVS) the composition is skewed to basic and acidic residues.

Its subcellular location is the nucleus. Functionally, transcription factor that binds specifically to a 5'-AA[AG]G-3' consensus core sequence. This chain is Dof zinc finger protein DOF1.7 (DOF1.7), found in Arabidopsis thaliana (Mouse-ear cress).